A 663-amino-acid polypeptide reads, in one-letter code: Translation factor GUF1 homolog, mitochondrial (663 aa).

Residues 1 to 33 (MAGAAALRRSARRVVLPGAYALSRALQHPERLL) constitute a mitochondrion transit peptide. The tr-type G domain occupies 55–247 (ERVRNFSIIA…AVIERIPSPP (193 aa)). GTP-binding positions include 64–71 (AHVDHGKS), 140–144 (DTPGH), and 194–197 (NKID).

It belongs to the TRAFAC class translation factor GTPase superfamily. Classic translation factor GTPase family. LepA subfamily.

The protein localises to the mitochondrion inner membrane. The catalysed reaction is GTP + H2O = GDP + phosphate + H(+). Functionally, promotes mitochondrial protein synthesis. May act as a fidelity factor of the translation reaction, by catalyzing a one-codon backward translocation of tRNAs on improperly translocated ribosomes. Binds to mitochondrial ribosomes in a GTP-dependent manner. The protein is Translation factor GUF1 homolog, mitochondrial of Oryza sativa subsp. japonica (Rice).